Here is a 363-residue protein sequence, read N- to C-terminus: tRNA N6-adenosine threonylcarbamoyltransferase (363 aa).

Fe cation-binding residues include H121 and H125. Substrate contacts are provided by residues 143–147 (LASGG), D176, G189, and N287. D315 serves as a coordination point for Fe cation.

This sequence belongs to the KAE1 / TsaD family. It depends on Fe(2+) as a cofactor.

Its subcellular location is the cytoplasm. The enzyme catalyses L-threonylcarbamoyladenylate + adenosine(37) in tRNA = N(6)-L-threonylcarbamoyladenosine(37) in tRNA + AMP + H(+). In terms of biological role, required for the formation of a threonylcarbamoyl group on adenosine at position 37 (t(6)A37) in tRNAs that read codons beginning with adenine. Is involved in the transfer of the threonylcarbamoyl moiety of threonylcarbamoyl-AMP (TC-AMP) to the N6 group of A37, together with TsaE and TsaB. TsaD likely plays a direct catalytic role in this reaction. This is tRNA N6-adenosine threonylcarbamoyltransferase from Rhodopseudomonas palustris (strain ATCC BAA-98 / CGA009).